Consider the following 198-residue polypeptide: Zinc finger protein 41 (198 aa).

The segment covering 1 to 12 (MEKPATRKKKSQ) has biased composition (basic residues). Positions 1 to 56 (MEKPATRKKKSQAPKEEAGAQKATVKGEKTSKGKKATKKPRKPRRPRKEPVLSPED) are disordered. Residues 13 to 31 (APKEEAGAQKATVKGEKTS) are compositionally biased toward basic and acidic residues. A compositionally biased stretch (basic residues) spans 32–47 (KGKKATKKPRKPRRPR). 4 consecutive C2H2-type zinc fingers follow at residues 87-109 (YECG…QRVH), 115-137 (FKCD…QRIH), 143-165 (FKCG…QKTH), and 171-193 (YGCE…RKRH).

The protein belongs to the krueppel C2H2-type zinc-finger protein family. In terms of tissue distribution, predominantly in the spermatocytes and spermatids of testes. It is also expressed in the fetus and embryonic stem cells at lower levels.

The protein localises to the nucleus. In terms of biological role, a putative DNA-binding regulatory protein associated with meiosis in spermatogenesis. The chain is Zinc finger protein 41 (Zfp41) from Mus musculus (Mouse).